Here is a 207-residue protein sequence, read N- to C-terminus: Dephospho-CoA kinase (207 aa).

The region spanning 12–207 (LIGITGMIGG…LYSTLLGKML (196 aa)) is the DPCK domain. 20–25 (GGGKST) lines the ATP pocket.

It belongs to the CoaE family.

It is found in the cytoplasm. It carries out the reaction 3'-dephospho-CoA + ATP = ADP + CoA + H(+). The protein operates within cofactor biosynthesis; coenzyme A biosynthesis; CoA from (R)-pantothenate: step 5/5. Catalyzes the phosphorylation of the 3'-hydroxyl group of dephosphocoenzyme A to form coenzyme A. The chain is Dephospho-CoA kinase from Leptospira interrogans serogroup Icterohaemorrhagiae serovar copenhageni (strain Fiocruz L1-130).